The primary structure comprises 419 residues: Tyrosine--tRNA ligase (419 aa).

Position 34 (Tyr-34) interacts with L-tyrosine. Positions 39-48 (PTADSLHIGH) match the 'HIGH' region motif. The L-tyrosine site is built by Tyr-169, Gln-173, and Asp-176. The 'KMSKS' region motif lies at 230 to 234 (KFGKT). Residue Lys-233 participates in ATP binding. Positions 352–419 (VPLVELLVSA…KKKYYLIRYA (68 aa)) constitute an S4 RNA-binding domain.

The protein belongs to the class-I aminoacyl-tRNA synthetase family. TyrS type 1 subfamily. Homodimer.

The protein resides in the cytoplasm. The enzyme catalyses tRNA(Tyr) + L-tyrosine + ATP = L-tyrosyl-tRNA(Tyr) + AMP + diphosphate + H(+). In terms of biological role, catalyzes the attachment of tyrosine to tRNA(Tyr) in a two-step reaction: tyrosine is first activated by ATP to form Tyr-AMP and then transferred to the acceptor end of tRNA(Tyr). This chain is Tyrosine--tRNA ligase (tyrS), found in Geobacillus stearothermophilus (Bacillus stearothermophilus).